Reading from the N-terminus, the 130-residue chain is Ribonuclease VapC4 (130 aa).

Residues 7 to 130 enclose the PINc domain; sequence LADTSVFIGI…AMPDVEVITI (124 aa). Positions 9 and 98 each coordinate Mg(2+).

Belongs to the PINc/VapC protein family. Interacts with cognate antitoxin VapB4. Mg(2+) serves as cofactor.

The protein resides in the secreted. Functionally, toxic component of a type II toxin-antitoxin (TA) system. Probably exerts its toxic effect by binding to mRNA, inhibiting translation. Binds to, recognizes and cleaves ssRNA at ACGC and AC(A/U)GC sequences, usually between the G and C; cleavage is not very efficient, nor is cleavage required to inhibit protein synthesis. Upon expression in situ, in M.smegmatis or E.coli inhibits cell growth and colony formation; in at least E.coli also causes increased levels of cellular RNA. Its toxic effect is neutralized by coexpression with cognate antitoxin VapB4. This is Ribonuclease VapC4 from Mycobacterium tuberculosis (strain ATCC 25618 / H37Rv).